The primary structure comprises 194 residues: dTTP/UTP pyrophosphatase (194 aa).

Asp-66 (proton acceptor) is an active-site residue.

The protein belongs to the Maf family. YhdE subfamily. A divalent metal cation serves as cofactor.

The protein resides in the cytoplasm. The enzyme catalyses dTTP + H2O = dTMP + diphosphate + H(+). It carries out the reaction UTP + H2O = UMP + diphosphate + H(+). In terms of biological role, nucleoside triphosphate pyrophosphatase that hydrolyzes dTTP and UTP. May have a dual role in cell division arrest and in preventing the incorporation of modified nucleotides into cellular nucleic acids. This Anaeromyxobacter dehalogenans (strain 2CP-1 / ATCC BAA-258) protein is dTTP/UTP pyrophosphatase.